The chain runs to 360 residues: MKASLLNKLDVLSDRFEELTALLGDAEVISDQTRFRAYSREYAEVEPVVALYQQLIRVQGDLEGAQALLKDSDPDMREMAVEEVRETKQQLVELEAQLQRMLLPKDPNDGRNVFLEIRAGTGGDEAAIFSGDLFRMYSRYAERRGWRVEILSENEGEHGGYKEVIARVEGDSVYGKLKFESGAHRVQRVPETESQGRIHTSACTVAVLPEPDEQQAIEINPADLRVDTYRSSGAGGQHVNKTDSAIRITHLPSGIVVECQEERSQHKNRARAMSWLSAKLNDQQTSAAANAIASERKLLVGSGDRSERIRTYNFPQGRVTDHRVNLTLYSLDEVLAGGVDAVIEPLLAEYQADQLAALGE.

Q237 bears the N5-methylglutamine mark.

Belongs to the prokaryotic/mitochondrial release factor family. In terms of processing, methylated by PrmC. Methylation increases the termination efficiency of RF1.

It localises to the cytoplasm. Its function is as follows. Peptide chain release factor 1 directs the termination of translation in response to the peptide chain termination codons UAG and UAA. This is Peptide chain release factor 1 from Pseudomonas savastanoi pv. phaseolicola (strain 1448A / Race 6) (Pseudomonas syringae pv. phaseolicola (strain 1448A / Race 6)).